The chain runs to 125 residues: Small ribosomal subunit protein bS6 (125 aa).

The disordered stretch occupies residues 99–125; it reads ASPMVKAKDERRASAEVENNDFEDAEE. Basic and acidic residues predominate over residues 104 to 113; it reads KAKDERRASA. The span at 116-125 shows a compositional bias: acidic residues; that stretch reads ENNDFEDAEE.

The protein belongs to the bacterial ribosomal protein bS6 family.

Binds together with bS18 to 16S ribosomal RNA. The polypeptide is Small ribosomal subunit protein bS6 (Mannheimia succiniciproducens (strain KCTC 0769BP / MBEL55E)).